A 194-amino-acid chain; its full sequence is Isopentenyl-diphosphate Delta-isomerase (194 aa).

Positions 27 and 34 each coordinate Mn(2+). The 135-residue stretch at 32-166 (ALHLAFSCHV…PWAFSPWLTL (135 aa)) folds into the Nudix hydrolase domain. Cysteine 69 is a catalytic residue. Residue histidine 71 participates in Mn(2+) binding. Mg(2+) is bound at residue glutamate 89. The Mn(2+) site is built by glutamate 116 and glutamate 118. Glutamate 118 is an active-site residue.

The protein belongs to the IPP isomerase type 1 family. It depends on Mg(2+) as a cofactor. The cofactor is Mn(2+).

It localises to the cytoplasm. The catalysed reaction is isopentenyl diphosphate = dimethylallyl diphosphate. It functions in the pathway isoprenoid biosynthesis; dimethylallyl diphosphate biosynthesis; dimethylallyl diphosphate from isopentenyl diphosphate: step 1/1. Its function is as follows. Catalyzes the 1,3-allylic rearrangement of the homoallylic substrate isopentenyl (IPP) to its highly electrophilic allylic isomer, dimethylallyl diphosphate (DMAPP). The protein is Isopentenyl-diphosphate Delta-isomerase of Clavibacter michiganensis subsp. michiganensis (strain NCPPB 382).